A 210-amino-acid chain; its full sequence is Peptidyl-tRNA hydrolase (210 aa).

Position 14 (Tyr14) interacts with tRNA. The active-site Proton acceptor is His19. Residues Phe64, Asn66, and Asn112 each contribute to the tRNA site.

The protein belongs to the PTH family. Monomer.

The protein localises to the cytoplasm. The enzyme catalyses an N-acyl-L-alpha-aminoacyl-tRNA + H2O = an N-acyl-L-amino acid + a tRNA + H(+). Hydrolyzes ribosome-free peptidyl-tRNAs (with 1 or more amino acids incorporated), which drop off the ribosome during protein synthesis, or as a result of ribosome stalling. In terms of biological role, catalyzes the release of premature peptidyl moieties from peptidyl-tRNA molecules trapped in stalled 50S ribosomal subunits, and thus maintains levels of free tRNAs and 50S ribosomes. The sequence is that of Peptidyl-tRNA hydrolase from Methylorubrum populi (strain ATCC BAA-705 / NCIMB 13946 / BJ001) (Methylobacterium populi).